We begin with the raw amino-acid sequence, 458 residues long: Tetratricopeptide repeat protein 23-like (458 aa).

Coiled-coil stretches lie at residues 175 to 198 and 246 to 278; these read GKQAYIHLQKAERNMKELKELNNG and TSELISLYEEIAQIEQLRKNHKQAIQYLQQAYS.

The protein localises to the cytoplasm. The protein resides in the cytoskeleton. Its subcellular location is the microtubule organizing center. It is found in the centrosome. It localises to the spindle. The protein localises to the midbody. This chain is Tetratricopeptide repeat protein 23-like (Ttc23l), found in Mus musculus (Mouse).